The chain runs to 426 residues: Deoxyguanosinetriphosphate triphosphohydrolase-like protein (426 aa).

The tract at residues 1 to 23 is disordered; that stretch reads MYPYSESDAQRLHQEAPKASQLA. In terms of domain architecture, HD spans 67-217; the sequence is RLTHSLEVAQ…MDFSDDIAYS (151 aa).

This sequence belongs to the dGTPase family. Type 2 subfamily.

The protein is Deoxyguanosinetriphosphate triphosphohydrolase-like protein of Corynebacterium efficiens (strain DSM 44549 / YS-314 / AJ 12310 / JCM 11189 / NBRC 100395).